We begin with the raw amino-acid sequence, 1171 residues long: DNA-directed RNA polymerase subunit beta' (1171 aa).

Positions 60, 62, 75, and 78 each coordinate Zn(2+). A disordered region spans residues 299–319 (GRRGKPVTGPGNRPLKSLSDM). Residues Asp449, Asp451, and Asp453 each contribute to the Mg(2+) site. 4 residues coordinate Zn(2+): Cys790, Cys864, Cys871, and Cys874.

Belongs to the RNA polymerase beta' chain family. In terms of assembly, the RNAP catalytic core consists of 2 alpha, 1 beta, 1 beta' and 1 omega subunit. When a sigma factor is associated with the core the holoenzyme is formed, which can initiate transcription. Mg(2+) serves as cofactor. Zn(2+) is required as a cofactor.

It carries out the reaction RNA(n) + a ribonucleoside 5'-triphosphate = RNA(n+1) + diphosphate. DNA-dependent RNA polymerase catalyzes the transcription of DNA into RNA using the four ribonucleoside triphosphates as substrates. This chain is DNA-directed RNA polymerase subunit beta', found in Alkaliphilus metalliredigens (strain QYMF).